A 271-amino-acid polypeptide reads, in one-letter code: Tryptophan synthase alpha chain (271 aa).

Residues Glu-49 and Asp-60 each act as proton acceptor in the active site.

Belongs to the TrpA family. Tetramer of two alpha and two beta chains.

It catalyses the reaction (1S,2R)-1-C-(indol-3-yl)glycerol 3-phosphate + L-serine = D-glyceraldehyde 3-phosphate + L-tryptophan + H2O. It functions in the pathway amino-acid biosynthesis; L-tryptophan biosynthesis; L-tryptophan from chorismate: step 5/5. The alpha subunit is responsible for the aldol cleavage of indoleglycerol phosphate to indole and glyceraldehyde 3-phosphate. The chain is Tryptophan synthase alpha chain from Leptothrix cholodnii (strain ATCC 51168 / LMG 8142 / SP-6) (Leptothrix discophora (strain SP-6)).